A 600-amino-acid polypeptide reads, in one-letter code: UvrABC system protein C (600 aa).

The GIY-YIG domain occupies 15-100 (NSAGVYQYFN…IKQLHPKYNI (86 aa)). The 36-residue stretch at 203–238 (SILIKNLEKQMLVLAQNENYEEAAKVRDQIVTIKDL) folds into the UVR domain.

Belongs to the UvrC family. As to quaternary structure, interacts with UvrB in an incision complex.

The protein resides in the cytoplasm. Functionally, the UvrABC repair system catalyzes the recognition and processing of DNA lesions. UvrC both incises the 5' and 3' sides of the lesion. The N-terminal half is responsible for the 3' incision and the C-terminal half is responsible for the 5' incision. This Campylobacter jejuni subsp. jejuni serotype O:6 (strain 81116 / NCTC 11828) protein is UvrABC system protein C.